Consider the following 595-residue polypeptide: Epsin-2 (595 aa).

A 1,2-diacyl-sn-glycero-3-phospho-(1D-myo-inositol-4,5-bisphosphate) contacts are provided by Arg8, Lys11, Arg25, Asn30, Arg63, and His73. The ENTH domain maps to 12 to 144; that stretch reads NIVNNYSEAE…KDEERLKVER (133 aa). A compositionally biased stretch (polar residues) spans 164–183; sequence NQITFGRGSSQPNLSTSYSE. 4 disordered regions span residues 164–254, 267–289, 305–396, and 423–469; these read NQIT…RLRR, SRRDTVKVPKKKEAKACCKPGSH, SGPV…KPSS, and TSKK…PESF. Arg170 is modified (omega-N-methylarginine). Ser173, Ser192, and Ser195 each carry phosphoserine. Polar residues-rich tracts occupy residues 197–216 and 235–245; these read HGSTSPRVSSELEQARPQTS and EQSSESVQTAR. 2 UIM domains span residues 218–237 and 255–274; these read EEELQLQLALAMSREVAEQS and GDDLRLQMALEESRRDTVKV. Over residues 306–337 the composition is skewed to polar residues; the sequence is GPVTQKTEPWSAGASANQTNPWGGTVAPSNIT. Tandem repeats lie at residues 313–315, 325–327, 338–340, and 352–354. The 6 X 3 AA repeats of [DE]-P-W stretch occupies residues 313-389; it reads EPWSAGASAN…SNAGKTTDAW (77 aa). The span at 358-367 shows a compositional bias: polar residues; that stretch reads TTASTQSVPK. Residues 370–372 form repeat 5; sequence DPW. Positions 374 to 384 are enriched in polar residues; it reads ASQQPASNAGK. Repeat unit 6 spans residues 387–389; that stretch reads DAW. Ser443 is subject to Phosphoserine. Residues 449 to 460 are compositionally biased toward low complexity; the sequence is SQSLTSASSKPS. Residue Thr465 is modified to Phosphothreonine. 2 tandem repeats follow at residues 494 to 496 and 508 to 510. A 3 X 3 AA repeats of N-P-F region spans residues 494 to 593; sequence NPFLAPGAAA…AQSTGTTNPF (100 aa). Residue Ser526 is modified to Phosphoserine. Repeat unit 3 spans residues 591–593; sequence NPF.

Belongs to the epsin family. In terms of assembly, binds EPS15, AP-2 and clathrin. Interacts with UBQLN2. Interacts with ITSN1. Ubiquitinated.

The protein localises to the cytoplasm. Its function is as follows. Plays a role in the formation of clathrin-coated invaginations and endocytosis. In Mus musculus (Mouse), this protein is Epsin-2 (Epn2).